Here is a 120-residue protein sequence, read N- to C-terminus: Large ribosomal subunit protein bL19 (120 aa).

This sequence belongs to the bacterial ribosomal protein bL19 family.

In terms of biological role, this protein is located at the 30S-50S ribosomal subunit interface and may play a role in the structure and function of the aminoacyl-tRNA binding site. This is Large ribosomal subunit protein bL19 from Rippkaea orientalis (strain PCC 8801 / RF-1) (Cyanothece sp. (strain PCC 8801)).